A 262-amino-acid polypeptide reads, in one-letter code: Thiazole synthase (262 aa).

The active-site Schiff-base intermediate with DXP is lysine 97. 1-deoxy-D-xylulose 5-phosphate is bound by residues glycine 158, 185–186, and 207–208; these read AG and NT.

It belongs to the ThiG family. Homotetramer. Forms heterodimers with either ThiH or ThiS.

It localises to the cytoplasm. It carries out the reaction [ThiS sulfur-carrier protein]-C-terminal-Gly-aminoethanethioate + 2-iminoacetate + 1-deoxy-D-xylulose 5-phosphate = [ThiS sulfur-carrier protein]-C-terminal Gly-Gly + 2-[(2R,5Z)-2-carboxy-4-methylthiazol-5(2H)-ylidene]ethyl phosphate + 2 H2O + H(+). Its pathway is cofactor biosynthesis; thiamine diphosphate biosynthesis. Catalyzes the rearrangement of 1-deoxy-D-xylulose 5-phosphate (DXP) to produce the thiazole phosphate moiety of thiamine. Sulfur is provided by the thiocarboxylate moiety of the carrier protein ThiS. In vitro, sulfur can be provided by H(2)S. The polypeptide is Thiazole synthase (Neisseria gonorrhoeae (strain ATCC 700825 / FA 1090)).